We begin with the raw amino-acid sequence, 279 residues long: NLP effector protein 9 (279 aa).

Positions 1 to 19 (MKISNLLGVLVVFLAVVKG) are cleaved as a signal peptide. A Conserved undecapeptide motif motif is present at residues 151–161 (AIMYAWYFPDI). N-linked (GlcNAc...) asparagine glycosylation is present at Asn176.

It belongs to the Necrosis inducing protein (NPP1) family.

The protein localises to the secreted. Its function is as follows. Secreted effector that acts as a pathogen-associated molecular pattern (PAMP) recognized by the plant immune system. Seems not to induce necrosis in Nicotiana benthamiana leaves. This chain is NLP effector protein 9, found in Plasmopara viticola (Downy mildew of grapevine).